Here is a 149-residue protein sequence, read N- to C-terminus: Protegrin-1 (149 aa).

A signal peptide spans 1-29 (METQRASLCLGRWSLWLLLLALVVPSASA). Residues 30–130 (QALSYREAVL…DITCNEVQGV (101 aa)) constitute a propeptide that is removed on maturation. The tract at residues 61–80 (DQPPKADEDPGTPKPVSFTV) is disordered. 4 disulfide bridges follow: C85–C96, C107–C124, C136–C145, and C138–C143. Arginine amide is present on R148.

This sequence belongs to the cathelicidin family.

It is found in the secreted. Microbicidal activity. Active against E.coli, Listeria monocytogenes and C.albicans, in vitro. This Sus scrofa (Pig) protein is Protegrin-1 (NPG1).